The chain runs to 836 residues: Neuroligin-2 (836 aa).

The signal sequence occupies residues 1-14 (MWLLALCLVGLAGA). The Extracellular portion of the chain corresponds to 15–678 (QRGGGGPGGG…DSRDYSTELS (664 aa)). Residues asparagine 98 and asparagine 136 are each glycosylated (N-linked (GlcNAc...) asparagine). Disulfide bonds link cysteine 106/cysteine 141, cysteine 317/cysteine 328, and cysteine 487/cysteine 521. The N-linked (GlcNAc...) asparagine glycan is linked to asparagine 522. Residues 623-661 (PPYATRWPPRTPGPGTSGTRRPPPPATLPPESDIDLGPR) form a disordered region. A helical transmembrane segment spans residues 679 to 699 (VTVAVGASLLFLNILAFAALY). The segment at 679 to 699 (VTVAVGASLLFLNILAFAALY) is required for interaction with LHFPL4. Residues 700-836 (YKRDRRQELR…LPHPHSTTRV (137 aa)) are Cytoplasmic-facing. Disordered stretches follow at residues 711 to 735 (RRLS…TAGR) and 791 to 836 (LLPS…TTRV). A phosphoserine mark is found at serine 714 and serine 719. Residues 717 to 728 (GGSGSGVPGGGP) are compositionally biased toward gly residues. A compositionally biased stretch (pro residues) spans 796–819 (LGPPPPPPPPSLHPFGPFPPPPPT). Over residues 824-836 (NNTLPHPHSTTRV) the composition is skewed to polar residues.

This sequence belongs to the type-B carboxylesterase/lipase family. As to quaternary structure, interacts with neurexins NRXN1, NRXN2 and NRXN3. Interaction with neurexins is mediated by heparan sulfate glycan modification on neurexin. Interacts (via its C-terminus) with DLG4/PSD-95 (via PDZ domain 3). Interacts with PATJ. Interacts with MDGA2. Interacts with GPHN. Interacts with MDGA1. Found in a complex with MAGI2 and IGSF9B, where it interacts with MAGI2 (via WW 1, WW 2 and PDZ 2 domains). Identified in a complex of 720 kDa composed of LHFPL4, NLGN2, GABRA1, GABRB2, GABRG2 and GABRB3. Interacts with LHFPL4; leading to mutual regulation of the protein level and synaptic clustering. Interacts with GABRA1. Brain and arteries. Detected in the retina outer plexiform layer (at protein level). Widely expressed. Detected in heart, brain, spleen, lung, liver, skeletal muscle, kidney and testis.

Its subcellular location is the cell membrane. It localises to the postsynaptic cell membrane. It is found in the presynaptic cell membrane. Transmembrane scaffolding protein involved in cell-cell interactions via its interactions with neurexin family members. Mediates cell-cell interactions both in neurons and in other types of cells, such as Langerhans beta cells. Mediates cell-cell interactions between Langerhans beta cells and modulates insulin secretion. Plays a role in synapse function and synaptic signal transmission, especially via gamma-aminobutyric acid receptors (GABA(A) receptors). Functions by recruiting and clustering synaptic proteins. Promotes clustering of postsynaptic GABRG2 and GPHN. Promotes clustering of postsynaptic LHFPL4. Modulates signaling by inhibitory synapses, and thereby plays a role in controlling the ratio of signaling by excitatory and inhibitory synapses and information processing. Required for normal signal amplitude from inhibitory synapses, but is not essential for normal signal frequency. May promote the initial formation of synapses, but is not essential for this. In vitro, triggers the de novo formation of presynaptic structures. This Mus musculus (Mouse) protein is Neuroligin-2 (Nlgn2).